A 536-amino-acid chain; its full sequence is MDKVGKMWNNFKYRCQNLFGHEGGSRSENVDMNSNRCLSVKKKNISLGDSAPQQQSSPLRENVALQLGLSPSKNSSRRNQNCAAEIPQIVEISIEKDNDSCVTPGTRLARRDSYSRHAPWGGKKKHSCSTKTQSSLDTDKKFGRTRSGLQRRERRYGVSSVHDMDSVSSRTVGSRSLRQRLQDTVGLCFPMRTYSKQSKPLFSNKRKIHLSELMLEKCPFPAGSDLAQKWHLIKQHTAPVSPHSTFFDTFDPSLVSTEDEEDRLRERRRLSIEEGVDPPPNAQIHTFEATAQVNPLYKLGPKLAPGMTEVNGDSCAVPQANCDSEEDTTTLCLQSRRQKQRQVSGDSHAHVSRQGAWKVHTQIDYIHCLVPDLLQITGNPCYWGVMDRYEAEALLEGKPEGTFLLRDSAQEDYLFSVSFRRYNRSLHARIEQWNHNFSFDAHDPCVFHSSTVTGLLEHYKDPSSCMFFEPLLTISLNRTFPFSLQYICRAVICRCTTYDGIDGLPLPSMLQDFLKEYHYKQKVRVRWLEREPVKAK.

The required for interaction with IL4R stretch occupies residues 1-50; the sequence is MDKVGKMWNNFKYRCQNLFGHEGGSRSENVDMNSNRCLSVKKKNISLGDS. The tract at residues 115 to 175 is disordered; that stretch reads SRHAPWGGKK…SVSSRTVGSR (61 aa). Positions 158 to 169 are enriched in low complexity; that stretch reads VSSVHDMDSVSS. Positions 381–476 constitute an SH2 domain; it reads CYWGVMDRYE…FFEPLLTISL (96 aa). The SOCS box domain occupies 471-520; the sequence is LLTISLNRTFPFSLQYICRAVICRCTTYDGIDGLPLPSMLQDFLKEYHYK.

In terms of assembly, interacts with EGFR. Interacts with ELOB and ELOC; mediates EGFR ubiquitination and degradation. Interacts with IL4R; inhibits IL4 signaling. In terms of processing, phosphorylated. Phosphorylation is induced by EGF.

The protein operates within protein modification; protein ubiquitination. In terms of biological role, SOCS family proteins form part of a classical negative feedback system that regulates cytokine signal transduction. May be a substrate-recognition component of a SCF-like ECS (Elongin BC-CUL2/5-SOCS-box protein) E3 ubiquitin-protein ligase complex which mediates the ubiquitination and subsequent proteasomal degradation of target proteins. Inhibits for instance EGF signaling by mediating the degradation of the EGF receptor/EGFR. Involved in the regulation of T-helper cell differentiation by inhibiting of the IL4 signaling pathway which promotes differentiation into the Th2 phenotype. Can also partially inhibit IL6 and LIF signaling. The polypeptide is Suppressor of cytokine signaling 5 (SOCS5) (Bos taurus (Bovine)).